Consider the following 348-residue polypeptide: Eukaryotic translation initiation factor 3 subunit H (348 aa).

The region spanning 35 to 169 is the MPN domain; it reads VQIDGLVVLK…LKAYRLTPKL (135 aa). The segment covering 267 to 285 has biased composition (low complexity); sequence QQQKHQYQQRRQQENIQRQ. A disordered region spans residues 267–311; sequence QQQKHQYQQRRQQENIQRQSRGEPPLPEEDINKLFKPPQPPPRME.

This sequence belongs to the eIF-3 subunit H family. As to quaternary structure, component of the eukaryotic translation initiation factor 3 (eIF-3) complex, which is composed of 13 subunits: EIF3A, EIF3B, EIF3C, EIF3D, EIF3E, EIF3F, EIF3G, EIF3H, EIF3I, EIF3J, EIF3K, EIF3L and EIF3M.

It is found in the cytoplasm. Functionally, component of the eukaryotic translation initiation factor 3 (eIF-3) complex, which is involved in protein synthesis of a specialized repertoire of mRNAs and, together with other initiation factors, stimulates binding of mRNA and methionyl-tRNAi to the 40S ribosome. The eIF-3 complex specifically targets and initiates translation of a subset of mRNAs involved in cell proliferation. This chain is Eukaryotic translation initiation factor 3 subunit H, found in Taeniopygia guttata (Zebra finch).